A 439-amino-acid polypeptide reads, in one-letter code: Xylose isomerase (439 aa).

Catalysis depends on residues H101 and D104. Positions 232, 268, 271, 296, 307, 309, and 339 each coordinate Mg(2+).

The protein belongs to the xylose isomerase family. In terms of assembly, homotetramer. It depends on Mg(2+) as a cofactor.

Its subcellular location is the cytoplasm. It catalyses the reaction alpha-D-xylose = alpha-D-xylulofuranose. The protein is Xylose isomerase (xylA) of Thermoanaerobacterium saccharolyticum.